We begin with the raw amino-acid sequence, 391 residues long: Formate-dependent phosphoribosylglycinamide formyltransferase (391 aa).

Residues 18 to 19 (EL) and Glu-78 each bind N(1)-(5-phospho-beta-D-ribosyl)glycinamide. Residues Arg-110, Lys-151, 156-161 (SSGKGQ), 191-194 (EEFI), and Glu-199 each bind ATP. The 191-residue stretch at 115 to 305 (ELAHEELGIR…EFELHLRAIL (191 aa)) folds into the ATP-grasp domain. Residues Glu-264 and Glu-276 each coordinate Mg(2+). N(1)-(5-phospho-beta-D-ribosyl)glycinamide contacts are provided by residues Asp-283, Lys-353, and 360–361 (RR).

This sequence belongs to the PurK/PurT family. As to quaternary structure, homodimer.

The catalysed reaction is N(1)-(5-phospho-beta-D-ribosyl)glycinamide + formate + ATP = N(2)-formyl-N(1)-(5-phospho-beta-D-ribosyl)glycinamide + ADP + phosphate + H(+). Its pathway is purine metabolism; IMP biosynthesis via de novo pathway; N(2)-formyl-N(1)-(5-phospho-D-ribosyl)glycinamide from N(1)-(5-phospho-D-ribosyl)glycinamide (formate route): step 1/1. In terms of biological role, involved in the de novo purine biosynthesis. Catalyzes the transfer of formate to 5-phospho-ribosyl-glycinamide (GAR), producing 5-phospho-ribosyl-N-formylglycinamide (FGAR). Formate is provided by PurU via hydrolysis of 10-formyl-tetrahydrofolate. The polypeptide is Formate-dependent phosphoribosylglycinamide formyltransferase (Nostoc sp. (strain PCC 7120 / SAG 25.82 / UTEX 2576)).